A 29-amino-acid chain; its full sequence is Cyclotide mela-2 (29 aa).

The segment at residues G1–D29 is a cross-link (cyclopeptide (Gly-Asp)). 3 disulfides stabilise this stretch: C5–C19, C9–C21, and C14–C26.

Post-translationally, this is a cyclic peptide. In terms of processing, contains 3 disulfide bonds.

Probably participates in a plant defense mechanism (Potential). Binds to and induces leakage in phospholipd membranes, particularly ones containing 1-palmitoyl-2-oleophosphatidylethanolamine (POPE). In vitro, displays cytotoxicity against cultured cells but no hemolytic activity towards fresh erythrocytes. Not active against Gram-negative bacterium E.coli ATCC 25922 or Gram-positive bacterium S.aureus ATCC 25923 up to a concentration of 64 uM. This chain is Cyclotide mela-2, found in Melicytus latifolius (Norfolk Island mahoe).